A 524-amino-acid chain; its full sequence is Putative ribose/galactose/methyl galactoside import ATP-binding protein 1 (524 aa).

ABC transporter domains follow at residues 29–270 (LEMR…VGRT) and 280–524 (VPIG…TGGH). 61–68 (GENGAGKS) is an ATP binding site.

The protein belongs to the ABC transporter superfamily. Carbohydrate importer 2 (CUT2) (TC 3.A.1.2) family.

The protein resides in the cell inner membrane. It catalyses the reaction D-ribose(out) + ATP + H2O = D-ribose(in) + ADP + phosphate + H(+). The enzyme catalyses D-galactose(out) + ATP + H2O = D-galactose(in) + ADP + phosphate + H(+). Its function is as follows. Part of an ABC transporter complex involved in carbohydrate import. Could be involved in ribose, galactose and/or methyl galactoside import. Responsible for energy coupling to the transport system. The chain is Putative ribose/galactose/methyl galactoside import ATP-binding protein 1 from Rhizobium etli (strain ATCC 51251 / DSM 11541 / JCM 21823 / NBRC 15573 / CFN 42).